We begin with the raw amino-acid sequence, 468 residues long: ATP synthase subunit beta (468 aa).

155–162 (GGAGVGKT) is an ATP binding site.

It belongs to the ATPase alpha/beta chains family. In terms of assembly, F-type ATPases have 2 components, CF(1) - the catalytic core - and CF(0) - the membrane proton channel. CF(1) has five subunits: alpha(3), beta(3), gamma(1), delta(1), epsilon(1). CF(0) has three main subunits: a(1), b(2) and c(9-12). The alpha and beta chains form an alternating ring which encloses part of the gamma chain. CF(1) is attached to CF(0) by a central stalk formed by the gamma and epsilon chains, while a peripheral stalk is formed by the delta and b chains.

The protein localises to the cell membrane. It carries out the reaction ATP + H2O + 4 H(+)(in) = ADP + phosphate + 5 H(+)(out). Its function is as follows. Produces ATP from ADP in the presence of a proton gradient across the membrane. The catalytic sites are hosted primarily by the beta subunits. The sequence is that of ATP synthase subunit beta from Streptococcus thermophilus (strain ATCC BAA-250 / LMG 18311).